The sequence spans 421 residues: Galactooligosaccharide-binding protein (421 aa).

An N-terminal signal peptide occupies residues 1-22 (MKMAKKCSVFMLCAAVSLSLAA). A lipid anchor (N-palmitoyl cysteine) is attached at Cys23. Cys23 is lipidated: S-diacylglycerol cysteine. The interval 393–421 (ATGKADPKQALDQAAETAKGQIKAKHSGK) is disordered.

The protein belongs to the bacterial solute-binding protein 1 family. In terms of assembly, the complex is composed of two ATP-binding proteins (MsmX), two transmembrane proteins (GanP and GanQ) and a solute-binding protein (GanS).

It is found in the cell membrane. Involved in galactan degradation. Part of the ABC transporter complex GanPQS involved in the uptake of galactooligosaccharides. Binds mainly galactotetraose and galactotriose. This chain is Galactooligosaccharide-binding protein, found in Bacillus subtilis (strain 168).